The sequence spans 29 residues: Small toxic protein ZorP (29 aa).

A helical membrane pass occupies residues 10–27 (VLIAVLELLVALLRLIDL).

It is found in the membrane. In terms of biological role, toxic component of a type I toxin-antitoxin (TA) system. Overexpression leads to cell stasis and a decrease in colony-forming units. Probably repressed by cognate small RNA orzP. Base pairing occurs between 18 bases in the 5' UTR of zorP mRNA and the 5' end of OrzP sRNA. This Escherichia coli O157:H7 protein is Small toxic protein ZorP.